A 187-amino-acid chain; its full sequence is UPF0301 protein CKO_04323 (187 aa).

The protein belongs to the UPF0301 (AlgH) family.

The polypeptide is UPF0301 protein CKO_04323 (Citrobacter koseri (strain ATCC BAA-895 / CDC 4225-83 / SGSC4696)).